Consider the following 379-residue polypeptide: MTINVNTNVSAMTAQRYLTKATGELNTSMERLSSGNRINSAKDDAAGLQISNRLTAQSRGLDVAMRNANDGISIAQTAEGAMNESTSILQRMRDLALQSANGTNSASERQALNEESVALQDELNRIAETTSFGGRKLLNGSFGEASFQIGSSSGEAIIMGLTSVRADDFRMGGQSFIAEQPKTKEWGVPPTARDLKFEFTKKDGEAVVLDIIAKDGDDIEELATYINGQTDLFKASVDQEGKLQIFVAEPNIEGNFNISGGLATELGLNGGPGVKTTVQDIDITSVGGSQNAVGIIDAALKYVDSQRADLGAKQNRLSHSISNLSNIQENVEASKSRIKDTDFAKETTQLTKSQILQQAGTSILAQAKQLPNSAISLLQ.

Coiled coils occupy residues 104–129 (NSAS…IAET) and 314–341 (QNRL…IKDT).

Belongs to the bacterial flagellin family. As to quaternary structure, heteromer of multiple flagellin subunits including FlaA, FlaB, FlaC, FlaD and FlaE.

It is found in the secreted. It localises to the bacterial flagellum. Flagellin is the subunit protein which polymerizes to form the filaments of bacterial flagella. FlaA is required to form a core or scaffold into which the other flagellins are inserted to provide structural integrity. Essential for flagellar synthesis and motility; important for full virulence. The polypeptide is Flagellin A (flaA) (Vibrio cholerae serotype O1 (strain ATCC 39541 / Classical Ogawa 395 / O395)).